The primary structure comprises 173 residues: 16S rRNA aminocarboxypropyltransferase (173 aa).

S-adenosyl-L-methionine is bound by residues T25, L72, L96, and S115.

Belongs to the TDD superfamily. TSR3 family.

The protein resides in the cytoplasm. It carries out the reaction an N(1)-methylpseudouridine in rRNA + S-adenosyl-L-methionine = N(1)-methyl-N(3)-[(3S)-3-amino-3-carboxypropyl]pseudouridine in rRNA + S-methyl-5'-thioadenosine + H(+). Its function is as follows. Aminocarboxypropyltransferase that catalyzes the aminocarboxypropyl transfer on pseudouridine corresponding to position 914 in M.jannaschii 16S rRNA. It constitutes the last step in biosynthesis of the hypermodified N1-methyl-N3-(3-amino-3-carboxypropyl) pseudouridine (m1acp3-Psi). The protein is 16S rRNA aminocarboxypropyltransferase of Methanosarcina mazei (strain ATCC BAA-159 / DSM 3647 / Goe1 / Go1 / JCM 11833 / OCM 88) (Methanosarcina frisia).